A 332-amino-acid polypeptide reads, in one-letter code: Anthranilate phosphoribosyltransferase (332 aa).

Residues Gly-79, 82–83, Ser-87, 89–92, 107–115, and Ser-119 contribute to the 5-phospho-alpha-D-ribose 1-diphosphate site; these read GD, NIST, and KHGNRSVSS. Gly-79 lines the anthranilate pocket. Mg(2+) is bound at residue Ser-91. Asn-110 provides a ligand contact to anthranilate. Arg-165 contacts anthranilate. Mg(2+)-binding residues include Asp-223 and Glu-224.

This sequence belongs to the anthranilate phosphoribosyltransferase family. Homodimer. It depends on Mg(2+) as a cofactor.

It carries out the reaction N-(5-phospho-beta-D-ribosyl)anthranilate + diphosphate = 5-phospho-alpha-D-ribose 1-diphosphate + anthranilate. It participates in amino-acid biosynthesis; L-tryptophan biosynthesis; L-tryptophan from chorismate: step 2/5. Catalyzes the transfer of the phosphoribosyl group of 5-phosphorylribose-1-pyrophosphate (PRPP) to anthranilate to yield N-(5'-phosphoribosyl)-anthranilate (PRA). The sequence is that of Anthranilate phosphoribosyltransferase from Photorhabdus laumondii subsp. laumondii (strain DSM 15139 / CIP 105565 / TT01) (Photorhabdus luminescens subsp. laumondii).